A 225-amino-acid polypeptide reads, in one-letter code: Riboflavin kinase (225 aa).

A unknown region spans residues 1–89 (MPDIKYLKKL…SRIFSPDLDI (89 aa)). Residues 90-225 (LELEGKVLKG…LKKQGTENQK (136 aa)) are riboflavin kinase. Position 99–104 (99–104 (GLGEGQ)) interacts with CDP. The Mg(2+) site is built by T128 and N130. The FMN site is built by T185 and E193. A CDP-binding site is contributed by 198–201 (IKLR).

Belongs to the archaeal riboflavin kinase family. The cofactor is Mg(2+).

It catalyses the reaction riboflavin + CTP = CDP + FMN + H(+). The protein operates within cofactor biosynthesis; FMN biosynthesis; FMN from riboflavin (CTP route): step 1/1. In terms of biological role, catalyzes the CTP-dependent phosphorylation of riboflavin (vitamin B2) to form flavin mononucleotide (FMN). The protein is Riboflavin kinase (ribK) of Methanosarcina barkeri (strain Fusaro / DSM 804).